The primary structure comprises 405 residues: Nicotinate phosphoribosyltransferase (405 aa).

Histidine 230 carries the post-translational modification Phosphohistidine; by autocatalysis.

This sequence belongs to the NAPRTase family. Transiently phosphorylated on a His residue during the reaction cycle. Phosphorylation strongly increases the affinity for substrates and increases the rate of nicotinate D-ribonucleotide production. Dephosphorylation regenerates the low-affinity form of the enzyme, leading to product release.

It carries out the reaction nicotinate + 5-phospho-alpha-D-ribose 1-diphosphate + ATP + H2O = nicotinate beta-D-ribonucleotide + ADP + phosphate + diphosphate. It participates in cofactor biosynthesis; NAD(+) biosynthesis; nicotinate D-ribonucleotide from nicotinate: step 1/1. Catalyzes the synthesis of beta-nicotinate D-ribonucleotide from nicotinate and 5-phospho-D-ribose 1-phosphate at the expense of ATP. This chain is Nicotinate phosphoribosyltransferase, found in Bordetella bronchiseptica (strain ATCC BAA-588 / NCTC 13252 / RB50) (Alcaligenes bronchisepticus).